The following is a 261-amino-acid chain: Transmembrane protein 187 (261 aa).

The next 6 membrane-spanning stretches (helical) occupy residues 8 to 28 (AFVH…TGIF), 43 to 63 (APVA…VNMA), 88 to 108 (VFAA…WTQW), 113 to 133 (VLDQ…CLYL), 140 to 162 (WLFL…HPQG), and 190 to 210 (SATY…LKLC).

As to expression, ubiquitous.

Its subcellular location is the membrane. The sequence is that of Transmembrane protein 187 (TMEM187) from Homo sapiens (Human).